Here is a 142-residue protein sequence, read N- to C-terminus: Transcriptional regulator MraZ (142 aa).

2 consecutive SpoVT-AbrB domains span residues 5-51 (ASSL…PRPV) and 77-120 (ASDV…DAAR).

This sequence belongs to the MraZ family. In terms of assembly, forms oligomers.

It localises to the cytoplasm. Its subcellular location is the nucleoid. This Herminiimonas arsenicoxydans protein is Transcriptional regulator MraZ.